A 341-amino-acid polypeptide reads, in one-letter code: UDP-3-O-acylglucosamine N-acyltransferase (341 aa).

The Proton acceptor role is filled by H239.

This sequence belongs to the transferase hexapeptide repeat family. LpxD subfamily. Homotrimer.

It catalyses the reaction a UDP-3-O-[(3R)-3-hydroxyacyl]-alpha-D-glucosamine + a (3R)-hydroxyacyl-[ACP] = a UDP-2-N,3-O-bis[(3R)-3-hydroxyacyl]-alpha-D-glucosamine + holo-[ACP] + H(+). It functions in the pathway bacterial outer membrane biogenesis; LPS lipid A biosynthesis. Its function is as follows. Catalyzes the N-acylation of UDP-3-O-acylglucosamine using 3-hydroxyacyl-ACP as the acyl donor. Is involved in the biosynthesis of lipid A, a phosphorylated glycolipid that anchors the lipopolysaccharide to the outer membrane of the cell. The polypeptide is UDP-3-O-acylglucosamine N-acyltransferase (Shewanella sp. (strain MR-7)).